The chain runs to 518 residues: Pumilio homolog 14 (518 aa).

Disordered regions lie at residues 26–46 and 77–114; these read TMASSSSQPQPISSPFHQPEN and VGQNGDSIHLPRRTNQVFTGSSSGGAGDDNGYLLPPMG. A compositionally biased stretch (low complexity) spans 29 to 44; the sequence is SSSSQPQPISSPFHQP. The region spanning 178–518 is the PUM-HD domain; the sequence is YTNRFGYEGY…GNKVLEKLNI (341 aa). The Pumilio 1; degenerate repeat unit spans residues 206–235; it reads SAFAKDKEMSERLGMSIFQGTKETVDAIYN. Pumilio repeat units lie at residues 236–271, 275–313, 314–348, 349–387, 388–423, 424–459, and 460–494; these read GLIGDICELMVDPYGSDVVQLLMRRCSSEQIVQLVD, QQMFQFVNICIDSLGTNAIQVLLTCINERAKDQIPRIVD, VVRTVALQLSKSNHAIFVILACFRLFPLHCRLLLE, LIVQNCHQIAIDQHGCCLLQLCFNKDRVPNLEIRQRLIM, EAIANALRLCLNCYGNYVVQYIVELNNRYLIDALVR, QLIGNYAHLARNKYGSHAVQKLLKLRWIDSRVIVID, and LLREIDTLLLDPFGNYVIQTAWFVSKDDVRRMLRY.

Its subcellular location is the cytoplasm. It is found in the nucleus. Functionally, sequence-specific RNA-binding protein that regulates translation and mRNA stability by binding the 3'-UTR of target mRNAs. The chain is Pumilio homolog 14 (APUM14) from Arabidopsis thaliana (Mouse-ear cress).